Here is a 146-residue protein sequence, read N- to C-terminus: GFLSAEEKGLVNGLWSKVNVDEVGGEALGRLLVVYPWTQRFFQSFGDLSSADAIMSNAKVKAHGKKVLNSFSDGLKNIDDLKGAFAKLSELHCDKLHVDPENFRLLGNVLVCVLAHHFGHEFNPQVQAAFQKVVAGVASALAHRYH.

The Globin domain maps to 2 to 146 (FLSAEEKGLV…VASALAHRYH (145 aa)). Lysine 17 bears the N6-succinyllysine mark. Residues serine 44 and serine 50 each carry the phosphoserine modification. Lysine 59 carries the N6-succinyllysine modification. Residues histidine 63 and histidine 92 each contribute to the heme b site. At arginine 104 the chain carries Asymmetric dimethylarginine.

The protein belongs to the globin family. In terms of assembly, heterotetramer of two alpha chains and two beta chains. In terms of tissue distribution, red blood cells.

Involved in oxygen transport from the lung to the various peripheral tissues. The sequence is that of Hemoglobin subunit beta-2 (HBB2) from Panthera pardus saxicolor (Northern Persian leopard).